Reading from the N-terminus, the 350-residue chain is Transcription factor MYB102 (350 aa).

HTH myb-type domains follow at residues 9 to 65 (KNGL…RPDI) and 66 to 116 (KRGR…RKKL). 2 DNA-binding regions (H-T-H motif) span residues 37–61 (WRTL…TNYL) and 89–112 (WSAI…NTHI).

Expressed in rosette leaves, cauline leaves and flowers.

The protein localises to the nucleus. Functionally, probable transcription factor that may function in osmotic stress and wounding signaling pathways. Contributes to basal resistance against the herbivore Pieris rapae (white cabbage butterfly) feeding. This is Transcription factor MYB102 from Arabidopsis thaliana (Mouse-ear cress).